A 459-amino-acid chain; its full sequence is uncharacterized protein (459 aa).

The disordered stretch occupies residues 28–47; that stretch reads AHDEELTGPPQKPAYAAKPA. The region spanning 35 to 214 is the FAD-binding PCMH-type domain; the sequence is GPPQKPAYAA…TEVIVKLHPR (180 aa).

This sequence belongs to the oxygen-dependent FAD-linked oxidoreductase family. The cofactor is FAD.

This is an uncharacterized protein from Mycobacterium tuberculosis (strain CDC 1551 / Oshkosh).